The sequence spans 227 residues: PKHD-type hydroxylase BPSS1206 (227 aa).

Positions 78 to 178 (KVFPPLFNRY…RVASFFWIQS (101 aa)) constitute a Fe2OG dioxygenase domain. The Fe cation site is built by His-96, Asp-98, and His-159. Arg-169 provides a ligand contact to 2-oxoglutarate.

Fe(2+) is required as a cofactor. It depends on L-ascorbate as a cofactor.

This Burkholderia pseudomallei (strain K96243) protein is PKHD-type hydroxylase BPSS1206.